Consider the following 378-residue polypeptide: Spermidine/putrescine import ATP-binding protein PotA (378 aa).

Residues 18 to 248 form the ABC transporter domain; the sequence is VLLSGISKSF…PKNLFVAGFI (231 aa). 50 to 57 contacts ATP; that stretch reads GPSGCGKT.

It belongs to the ABC transporter superfamily. Spermidine/putrescine importer (TC 3.A.1.11.1) family. The complex is composed of two ATP-binding proteins (PotA), two transmembrane proteins (PotB and PotC) and a solute-binding protein (PotD).

The protein resides in the cell inner membrane. It catalyses the reaction ATP + H2O + polyamine-[polyamine-binding protein]Side 1 = ADP + phosphate + polyamineSide 2 + [polyamine-binding protein]Side 1.. In terms of biological role, part of the ABC transporter complex PotABCD involved in spermidine/putrescine import. Responsible for energy coupling to the transport system. This is Spermidine/putrescine import ATP-binding protein PotA from Salmonella choleraesuis (strain SC-B67).